The following is a 318-amino-acid chain: 4-hydroxy-3-methylbut-2-enyl diphosphate reductase (318 aa).

C12 lines the [4Fe-4S] cluster pocket. Residues H41 and H74 each coordinate (2E)-4-hydroxy-3-methylbut-2-enyl diphosphate. The dimethylallyl diphosphate site is built by H41 and H74. H41 and H74 together coordinate isopentenyl diphosphate. C96 provides a ligand contact to [4Fe-4S] cluster. H124 lines the (2E)-4-hydroxy-3-methylbut-2-enyl diphosphate pocket. H124 serves as a coordination point for dimethylallyl diphosphate. Residue H124 coordinates isopentenyl diphosphate. E126 functions as the Proton donor in the catalytic mechanism. (2E)-4-hydroxy-3-methylbut-2-enyl diphosphate is bound at residue T168. C198 lines the [4Fe-4S] cluster pocket. The (2E)-4-hydroxy-3-methylbut-2-enyl diphosphate site is built by S226, S227, N228, and S270. Positions 226, 227, 228, and 270 each coordinate dimethylallyl diphosphate. Isopentenyl diphosphate-binding residues include S226, S227, N228, and S270.

The protein belongs to the IspH family. [4Fe-4S] cluster serves as cofactor.

The catalysed reaction is isopentenyl diphosphate + 2 oxidized [2Fe-2S]-[ferredoxin] + H2O = (2E)-4-hydroxy-3-methylbut-2-enyl diphosphate + 2 reduced [2Fe-2S]-[ferredoxin] + 2 H(+). The enzyme catalyses dimethylallyl diphosphate + 2 oxidized [2Fe-2S]-[ferredoxin] + H2O = (2E)-4-hydroxy-3-methylbut-2-enyl diphosphate + 2 reduced [2Fe-2S]-[ferredoxin] + 2 H(+). Its pathway is isoprenoid biosynthesis; dimethylallyl diphosphate biosynthesis; dimethylallyl diphosphate from (2E)-4-hydroxy-3-methylbutenyl diphosphate: step 1/1. The protein operates within isoprenoid biosynthesis; isopentenyl diphosphate biosynthesis via DXP pathway; isopentenyl diphosphate from 1-deoxy-D-xylulose 5-phosphate: step 6/6. Its function is as follows. Catalyzes the conversion of 1-hydroxy-2-methyl-2-(E)-butenyl 4-diphosphate (HMBPP) into a mixture of isopentenyl diphosphate (IPP) and dimethylallyl diphosphate (DMAPP). Acts in the terminal step of the DOXP/MEP pathway for isoprenoid precursor biosynthesis. The chain is 4-hydroxy-3-methylbut-2-enyl diphosphate reductase from Psychrobacter sp. (strain PRwf-1).